The chain runs to 362 residues: Phosphoserine aminotransferase (362 aa).

The L-glutamate site is built by Ser-9 and Arg-42. Pyridoxal 5'-phosphate is bound by residues 76-77 (GR), Trp-102, Thr-153, Asp-174, and Gln-197. N6-(pyridoxal phosphate)lysine is present on Lys-198. Pyridoxal 5'-phosphate is bound at residue 239-240 (NT).

The protein belongs to the class-V pyridoxal-phosphate-dependent aminotransferase family. SerC subfamily. Homodimer. Pyridoxal 5'-phosphate serves as cofactor.

Its subcellular location is the cytoplasm. The enzyme catalyses O-phospho-L-serine + 2-oxoglutarate = 3-phosphooxypyruvate + L-glutamate. The catalysed reaction is 4-(phosphooxy)-L-threonine + 2-oxoglutarate = (R)-3-hydroxy-2-oxo-4-phosphooxybutanoate + L-glutamate. It participates in amino-acid biosynthesis; L-serine biosynthesis; L-serine from 3-phospho-D-glycerate: step 2/3. It functions in the pathway cofactor biosynthesis; pyridoxine 5'-phosphate biosynthesis; pyridoxine 5'-phosphate from D-erythrose 4-phosphate: step 3/5. Catalyzes the reversible conversion of 3-phosphohydroxypyruvate to phosphoserine and of 3-hydroxy-2-oxo-4-phosphonooxybutanoate to phosphohydroxythreonine. The sequence is that of Phosphoserine aminotransferase from Enterobacter sp. (strain 638).